Consider the following 223-residue polypeptide: Phosphoribosylformylglycinamidine synthase subunit PurQ (223 aa).

In terms of domain architecture, Glutamine amidotransferase type-1 spans 3–223; it reads FAVLVFPGSN…MVKSWREQHV (221 aa). The active-site Nucleophile is the Cys85. Catalysis depends on residues His193 and Glu195.

In terms of assembly, part of the FGAM synthase complex composed of 1 PurL, 1 PurQ and 2 PurS subunits.

The protein resides in the cytoplasm. The catalysed reaction is N(2)-formyl-N(1)-(5-phospho-beta-D-ribosyl)glycinamide + L-glutamine + ATP + H2O = 2-formamido-N(1)-(5-O-phospho-beta-D-ribosyl)acetamidine + L-glutamate + ADP + phosphate + H(+). It catalyses the reaction L-glutamine + H2O = L-glutamate + NH4(+). Its pathway is purine metabolism; IMP biosynthesis via de novo pathway; 5-amino-1-(5-phospho-D-ribosyl)imidazole from N(2)-formyl-N(1)-(5-phospho-D-ribosyl)glycinamide: step 1/2. In terms of biological role, part of the phosphoribosylformylglycinamidine synthase complex involved in the purines biosynthetic pathway. Catalyzes the ATP-dependent conversion of formylglycinamide ribonucleotide (FGAR) and glutamine to yield formylglycinamidine ribonucleotide (FGAM) and glutamate. The FGAM synthase complex is composed of three subunits. PurQ produces an ammonia molecule by converting glutamine to glutamate. PurL transfers the ammonia molecule to FGAR to form FGAM in an ATP-dependent manner. PurS interacts with PurQ and PurL and is thought to assist in the transfer of the ammonia molecule from PurQ to PurL. The polypeptide is Phosphoribosylformylglycinamidine synthase subunit PurQ (Staphylococcus aureus (strain MSSA476)).